We begin with the raw amino-acid sequence, 221 residues long: ATP-dependent dethiobiotin synthetase BioD (221 aa).

12-17 (EVGKTV) is a binding site for ATP. Thr-16 contacts Mg(2+). The active site involves Lys-39. Substrate is bound at residue Thr-43. Residues Asp-47, 105–108 (EGLG), and 165–166 (SC) contribute to the ATP site. Positions 47 and 105 each coordinate Mg(2+).

This sequence belongs to the dethiobiotin synthetase family. In terms of assembly, homodimer. Mg(2+) is required as a cofactor.

The protein resides in the cytoplasm. It carries out the reaction (7R,8S)-7,8-diammoniononanoate + CO2 + ATP = (4R,5S)-dethiobiotin + ADP + phosphate + 3 H(+). The catalysed reaction is (7R,8S)-8-amino-7-(carboxyamino)nonanoate + ATP = (4R,5S)-dethiobiotin + ADP + phosphate + H(+). It functions in the pathway cofactor biosynthesis; biotin biosynthesis; biotin from 7,8-diaminononanoate: step 1/2. Its function is as follows. Catalyzes a mechanistically unusual reaction, the ATP-dependent insertion of CO2 between the N7 and N8 nitrogen atoms of 7,8-diaminopelargonic acid (DAPA, also called 7,8-diammoniononanoate) to form a ureido ring. This cyanobacterium does not encode bioA (which catalyzes the formation of the precursor for this reaction in the cannonical pathway), instead it encodes bioU, which replaces bioA and also performs the first half of the cannonical BioD reaction. Thus in this organism BioD has a different substrate. This chain is ATP-dependent dethiobiotin synthetase BioD, found in Crocosphaera subtropica (strain ATCC 51142 / BH68) (Cyanothece sp. (strain ATCC 51142)).